A 238-amino-acid chain; its full sequence is Survival of motor neuron-related-splicing factor 30 (238 aa).

The Tudor domain occupies 72 to 132; sequence SWKVGDKCMA…KPVEEGRKAK (61 aa). The Nuclear localization signal motif lies at 142-160; the sequence is KKEMIAQQREYKKKKALKK. At Ser201 the chain carries Phosphoserine. Lys219 is subject to N6-acetyllysine.

Belongs to the SMN family. Associates with spliceosomes. Associates with U4/U5/U6 tri-snRNP and with U2 snRNP.

The protein localises to the nucleus speckle. Its subcellular location is the nucleus. It is found in the cajal body. In terms of biological role, involved in spliceosome assembly. In Rattus norvegicus (Rat), this protein is Survival of motor neuron-related-splicing factor 30 (Smndc1).